Consider the following 616-residue polypeptide: Dihydroxy-acid dehydratase (616 aa).

Aspartate 81 serves as a coordination point for Mg(2+). Cysteine 122 is a [2Fe-2S] cluster binding site. Residues aspartate 123 and lysine 124 each contribute to the Mg(2+) site. An N6-carboxylysine modification is found at lysine 124. Position 195 (cysteine 195) interacts with [2Fe-2S] cluster. Glutamate 491 provides a ligand contact to Mg(2+). The active-site Proton acceptor is the serine 517.

It belongs to the IlvD/Edd family. Homodimer. [2Fe-2S] cluster is required as a cofactor. Mg(2+) serves as cofactor.

It catalyses the reaction (2R)-2,3-dihydroxy-3-methylbutanoate = 3-methyl-2-oxobutanoate + H2O. The catalysed reaction is (2R,3R)-2,3-dihydroxy-3-methylpentanoate = (S)-3-methyl-2-oxopentanoate + H2O. The protein operates within amino-acid biosynthesis; L-isoleucine biosynthesis; L-isoleucine from 2-oxobutanoate: step 3/4. Its pathway is amino-acid biosynthesis; L-valine biosynthesis; L-valine from pyruvate: step 3/4. Its function is as follows. Functions in the biosynthesis of branched-chain amino acids. Catalyzes the dehydration of (2R,3R)-2,3-dihydroxy-3-methylpentanoate (2,3-dihydroxy-3-methylvalerate) into 2-oxo-3-methylpentanoate (2-oxo-3-methylvalerate) and of (2R)-2,3-dihydroxy-3-methylbutanoate (2,3-dihydroxyisovalerate) into 2-oxo-3-methylbutanoate (2-oxoisovalerate), the penultimate precursor to L-isoleucine and L-valine, respectively. The protein is Dihydroxy-acid dehydratase of Shigella flexneri.